A 230-amino-acid polypeptide reads, in one-letter code: Protein STK_02290 (230 aa).

One can recognise an AMMECR1 domain in the interval 15–213; it reads NLGKVLIKIA…EEKPKSEKIL (199 aa).

The polypeptide is Protein STK_02290 (Sulfurisphaera tokodaii (strain DSM 16993 / JCM 10545 / NBRC 100140 / 7) (Sulfolobus tokodaii)).